The chain runs to 325 residues: SPbeta prophage-derived uncharacterized protein YopR (325 aa).

The chain is SPbeta prophage-derived uncharacterized protein YopR (yopR) from Bacillus subtilis (strain 168).